A 297-amino-acid chain; its full sequence is Vacuolar protein sorting-associated protein 26C (297 aa).

The protein belongs to the VPS26 family. Component of the commander complex that is essential for endosomal recycling of transmembrane cargos; the commander complex is composed of the CCC subcomplex and the retriever subcomplex. Component of the heterotrimeric retriever complex consisting of VPS26C, VPS29 and VPS35L; within the complex interacts with VPS35L. Interacts with SNX17 (via C-terminus); the interaction is direct and associates SNX17 with the retriever complex. Interacts with SNX31; the interaction is direct. In terms of tissue distribution, ubiquitously expressed.

The protein localises to the endosome. Functionally, component of the commander complex that is essential for endosomal recycling of transmembrane cargos; the commander complex is composed of the CCC subcomplex and the retriever subcomplex. Component of the retriever complex, which is a heterotrimeric complex related to retromer cargo-selective complex (CSC) and essential for retromer-independent retrieval and recycling of numerous cargos such as integrin alpha-5/beta-1 (ITGA5:ITGB1). The recruitment of the retriever complex to the endosomal membrane involves CCC and WASH complexes. In the endosomes, drives the retriever and recycling of NxxY-motif-containing cargo proteins by coupling to SNX17, a cargo essential for the homeostatic maintenance of numerous cell surface proteins associated with processes that include cell migration, cell adhesion, nutrient supply and cell signaling. Its function is as follows. (Microbial infection) The heterotrimeric retriever complex, in collaboration with the CCC complex, mediates the exit of human papillomavirus to the cell surface. This chain is Vacuolar protein sorting-associated protein 26C, found in Homo sapiens (Human).